Here is a 121-residue protein sequence, read N- to C-terminus: MSAAALALAAAEEGGASAAAPDASGKSKKGARPCFRRNLQAGSCMTGRQTPVRRSPAGPRLEPGVLRLNPWKITLRLQGASHLMLSLSSLTAYAARGQWPKKLAQQPPRLEGSQKERSPVV.

The segment covering 12-24 has biased composition (low complexity); sequence EEGGASAAAPDAS. Disordered stretches follow at residues 12–63 and 101–121; these read EEGG…RLEP and KKLAQQPPRLEGSQKERSPVV. Positions 26-35 are enriched in basic residues; that stretch reads KSKKGARPCF. Over residues 40-49 the composition is skewed to polar residues; sequence QAGSCMTGRQ. The span at 112 to 121 shows a compositional bias: basic and acidic residues; the sequence is GSQKERSPVV.

This is an uncharacterized protein from Homo sapiens (Human).